A 106-amino-acid polypeptide reads, in one-letter code: Toxin-like structure LSTX-D8 (106 aa).

An N-terminal signal peptide occupies residues 1–20 (MTKVLVVVALLVTLISYSSS). Residues 21–41 (EGIDDLEADELLSLMANEQTR) constitute a propeptide that is removed on maturation. Disulfide bonds link cysteine 45/cysteine 60, cysteine 52/cysteine 69, cysteine 59/cysteine 85, and cysteine 71/cysteine 83.

Belongs to the neurotoxin 19 (CSTX) family. 02 (D7) subfamily. As to expression, expressed by the venom gland.

The protein localises to the secreted. This is Toxin-like structure LSTX-D8 from Lycosa singoriensis (Wolf spider).